The primary structure comprises 219 residues: Transmembrane protein 179B (219 aa).

Transmembrane regions (helical) follow at residues 6–26 (PLLLELLLYGSCFICGIITAA), 69–89 (ISVCVAVFCFSLTLYWIYIAF), 105–125 (LGLSGVFLFFLLVTGCILKIG), and 167–187 (AETAVWVNFFFWMIIVVLVLI). The disordered stretch occupies residues 195–219 (IRPGTEDPSAPPSETEPFFNRPGRP).

The protein belongs to the TMEM179 family.

It is found in the membrane. The sequence is that of Transmembrane protein 179B (tmem179b) from Danio rerio (Zebrafish).